A 130-amino-acid polypeptide reads, in one-letter code: Small ribosomal subunit protein eS8 (130 aa).

This sequence belongs to the eukaryotic ribosomal protein eS8 family. Part of the 30S ribosomal subunit.

This chain is Small ribosomal subunit protein eS8, found in Ignicoccus hospitalis (strain KIN4/I / DSM 18386 / JCM 14125).